We begin with the raw amino-acid sequence, 1460 residues long: ABC transporter C family member 5 (1460 aa).

Disordered stretches follow at residues 1 to 23 and 37 to 68; these read MKYNNLENDDSDIHNNNNNNESE and GNNNNDINNNNNINNNNDSLDYENNKGSKKKN. Positions 37–55 are enriched in low complexity; that stretch reads GNNNNDINNNNNINNNNDS. Helical transmembrane passes span 196 to 216, 238 to 258, 320 to 340, 425 to 445, and 456 to 476; these read FALSWVHFGLNVISQFIGPIF, LGYYYALILFVNSMLGSIFLY, LIFAVPMIIVSMILLYDCVGW, LIVVVQSIPTIISIFMFTVYY, and IFAAVAYLNIIRVPFTFLPYG. One can recognise an ABC transmembrane type-1 1 domain in the interval 196 to 482; that stretch reads FALSWVHFGL…LPYGYNIYIQ (287 aa). Residues 537–567 are disordered; it reads IKPQTNPPPPRTTPSNDKSSPSGNNSNNEKK. Residues 551 to 563 show a composition bias toward polar residues; it reads SNDKSSPSGNNSN. Residues 560-783 enclose the ABC transporter 1 domain; sequence NNSNNEKKEV…INSAYGNSSL (224 aa). An ATP-binding site is contributed by 593 to 600; that stretch reads GPVGSGKS. 4 helical membrane-spanning segments follow: residues 842–862, 922–942, 1014–1034, and 1108–1128; these read MYYVTAGGGFLFLIALLGYCI, AGEFLGVFIAIGVLTVLLIIV, ILVIISIATPWLLLPMTPIII, and WLGLRLSVLGNLITLLSCIFI. The ABC transmembrane type-1 2 domain maps to 853 to 1166; it reads FLIALLGYCI…ATQQLAELET (314 aa). The region spanning 1210-1444 is the ABC transporter 2 domain; the sequence is IIFENVVMSY…ENSLFNWLID (235 aa). ATP is bound at residue 1244–1251; that stretch reads GRTGSGKS.

This sequence belongs to the ABC transporter superfamily. ABCC family. Conjugate transporter (TC 3.A.1.208) subfamily.

The protein localises to the membrane. The sequence is that of ABC transporter C family member 5 (abcC5) from Dictyostelium discoideum (Social amoeba).